A 201-amino-acid polypeptide reads, in one-letter code: Recombination protein RecR (201 aa).

Residues 57-72 form a C4-type zinc finger; the sequence is CADCRTFTEQEVCNIC. In terms of domain architecture, Toprim spans 81 to 176; sequence GQICVVESPA…EASRIAHGVP (96 aa).

This sequence belongs to the RecR family.

In terms of biological role, may play a role in DNA repair. It seems to be involved in an RecBC-independent recombinational process of DNA repair. It may act with RecF and RecO. This is Recombination protein RecR from Salmonella arizonae (strain ATCC BAA-731 / CDC346-86 / RSK2980).